A 622-amino-acid chain; its full sequence is MDVLRTASARRTFKWQAAGILARTSWVCRSCRSQFVAPKAARRTLATSTTTTTPTAPDNKPFYVTTPIFYVNASPHVGHMYSMVLGDVLKRWQTLKGNQAILCTGTDEHGTKVQRAAIANDMDPKQFCDLNSAKFQELAAACRIDYDRFMRTTDQDHVEAVKHFWLLLKEKGLIYEAKHEGWYCVSDECFYPESQLEKRQDPFTGEVYVASIESGNKVEWIEEKNYHFRMTALKDQLLEFYKNNPDWIVPQTRMNQVVDWVTNNLEDLSISRPVSRLSWGIRVPDDESQTIYVWVDALINYITMAGYPYWPPGREHLGGWPVDVHVIGKDILRFHCIYWPALLLALDLPLPKRILSHAHWTMEKKKMSKSIGNVVNPFYAMERFGIDTMRFYMIHNGGIANDADYSNDWLTVEYKKHLQNGVGNLSARVTRPKQWSLRRAVQSYQDGNMLLQSTGEQINDSCVEHITRLDKLASTIDNEMLQLNPSHALQKIMGLIGETNAFISNAEPWVIVKKQDSEALVDRIILTAGESLRIAGILLQPFMPDKAAQLLDLLGVENHNRTFHHARPLVDATYGTAFRTFGKEGIFPPPILDDIKGMGPDAGSKKHSSGNKPSSGNKKPTA.

Positions 67–79 match the 'HIGH' region motif; the sequence is PIFYVNASPHVGH. The 'KMSKS' region motif lies at 366-370; the sequence is KMSKS. Position 369 (Lys369) interacts with ATP. The disordered stretch occupies residues 592-622; sequence LDDIKGMGPDAGSKKHSSGNKPSSGNKKPTA. Positions 610–622 are enriched in low complexity; that stretch reads GNKPSSGNKKPTA.

The protein belongs to the class-I aminoacyl-tRNA synthetase family.

The protein localises to the mitochondrion matrix. The enzyme catalyses tRNA(Met) + L-methionine + ATP = L-methionyl-tRNA(Met) + AMP + diphosphate. The chain is Probable methionine--tRNA ligase, mitochondrial from Neurospora crassa (strain ATCC 24698 / 74-OR23-1A / CBS 708.71 / DSM 1257 / FGSC 987).